A 237-amino-acid polypeptide reads, in one-letter code: Sugar fermentation stimulation protein homolog (237 aa).

It belongs to the SfsA family.

This Synechocystis sp. (strain ATCC 27184 / PCC 6803 / Kazusa) protein is Sugar fermentation stimulation protein homolog.